Here is a 239-residue protein sequence, read N- to C-terminus: NAD-dependent protein deacylase (239 aa).

The region spanning 1 to 239 (MNVLILTGAG…PKLLNHFSAM (239 aa)) is the Deacetylase sirtuin-type domain. 8–27 (GAGISAESGIPTFRDANGLW) is a binding site for NAD(+). Substrate is bound by residues Y52 and R55. 93–96 (QNID) contacts NAD(+). H111 serves as the catalytic Proton acceptor. Residues 182–184 (GTS), 207–209 (NLD), and A225 contribute to the NAD(+) site.

Belongs to the sirtuin family. Class III subfamily.

The protein resides in the cytoplasm. It carries out the reaction N(6)-acetyl-L-lysyl-[protein] + NAD(+) + H2O = 2''-O-acetyl-ADP-D-ribose + nicotinamide + L-lysyl-[protein]. The enzyme catalyses N(6)-succinyl-L-lysyl-[protein] + NAD(+) + H2O = 2''-O-succinyl-ADP-D-ribose + nicotinamide + L-lysyl-[protein]. NAD-dependent lysine deacetylase and desuccinylase that specifically removes acetyl and succinyl groups on target proteins. Modulates the activities of several proteins which are inactive in their acylated form. The sequence is that of NAD-dependent protein deacylase from Rhodopirellula baltica (strain DSM 10527 / NCIMB 13988 / SH1).